Reading from the N-terminus, the 209-residue chain is Thiamine-phosphate synthase (209 aa).

Residues 36–40 (QLRDK) and N68 each bind 4-amino-2-methyl-5-(diphosphooxymethyl)pyrimidine. D69 and D88 together coordinate Mg(2+). A 4-amino-2-methyl-5-(diphosphooxymethyl)pyrimidine-binding site is contributed by S107. 133–135 (TNS) provides a ligand contact to 2-[(2R,5Z)-2-carboxy-4-methylthiazol-5(2H)-ylidene]ethyl phosphate. K136 lines the 4-amino-2-methyl-5-(diphosphooxymethyl)pyrimidine pocket. 2-[(2R,5Z)-2-carboxy-4-methylthiazol-5(2H)-ylidene]ethyl phosphate-binding positions include G164 and 184–185 (IT).

The protein belongs to the thiamine-phosphate synthase family. Mg(2+) serves as cofactor.

The catalysed reaction is 2-[(2R,5Z)-2-carboxy-4-methylthiazol-5(2H)-ylidene]ethyl phosphate + 4-amino-2-methyl-5-(diphosphooxymethyl)pyrimidine + 2 H(+) = thiamine phosphate + CO2 + diphosphate. The enzyme catalyses 2-(2-carboxy-4-methylthiazol-5-yl)ethyl phosphate + 4-amino-2-methyl-5-(diphosphooxymethyl)pyrimidine + 2 H(+) = thiamine phosphate + CO2 + diphosphate. It catalyses the reaction 4-methyl-5-(2-phosphooxyethyl)-thiazole + 4-amino-2-methyl-5-(diphosphooxymethyl)pyrimidine + H(+) = thiamine phosphate + diphosphate. Its pathway is cofactor biosynthesis; thiamine diphosphate biosynthesis; thiamine phosphate from 4-amino-2-methyl-5-diphosphomethylpyrimidine and 4-methyl-5-(2-phosphoethyl)-thiazole: step 1/1. Condenses 4-methyl-5-(beta-hydroxyethyl)thiazole monophosphate (THZ-P) and 2-methyl-4-amino-5-hydroxymethyl pyrimidine pyrophosphate (HMP-PP) to form thiamine monophosphate (TMP). This is Thiamine-phosphate synthase from Shouchella clausii (strain KSM-K16) (Alkalihalobacillus clausii).